The following is a 231-amino-acid chain: Phosphatidylserine decarboxylase proenzyme (231 aa).

Residue S189 is the Schiff-base intermediate with substrate; via pyruvic acid of the active site. Position 189 is a pyruvic acid (Ser); by autocatalysis (S189).

This sequence belongs to the phosphatidylserine decarboxylase family. PSD-A subfamily. Heterodimer of a large membrane-associated beta subunit and a small pyruvoyl-containing alpha subunit. Pyruvate serves as cofactor. Post-translationally, is synthesized initially as an inactive proenzyme. Formation of the active enzyme involves a self-maturation process in which the active site pyruvoyl group is generated from an internal serine residue via an autocatalytic post-translational modification. Two non-identical subunits are generated from the proenzyme in this reaction, and the pyruvate is formed at the N-terminus of the alpha chain, which is derived from the carboxyl end of the proenzyme. The post-translation cleavage follows an unusual pathway, termed non-hydrolytic serinolysis, in which the side chain hydroxyl group of the serine supplies its oxygen atom to form the C-terminus of the beta chain, while the remainder of the serine residue undergoes an oxidative deamination to produce ammonia and the pyruvoyl prosthetic group on the alpha chain.

The protein localises to the cell membrane. The catalysed reaction is a 1,2-diacyl-sn-glycero-3-phospho-L-serine + H(+) = a 1,2-diacyl-sn-glycero-3-phosphoethanolamine + CO2. It functions in the pathway phospholipid metabolism; phosphatidylethanolamine biosynthesis; phosphatidylethanolamine from CDP-diacylglycerol: step 2/2. Its function is as follows. Catalyzes the formation of phosphatidylethanolamine (PtdEtn) from phosphatidylserine (PtdSer). This is Phosphatidylserine decarboxylase proenzyme from Chelativorans sp. (strain BNC1).